Reading from the N-terminus, the 989-residue chain is Zinc finger SWIM domain-containing protein 4 (989 aa).

A disordered region spans residues 1-32 (MEPPAAKRSRGCPAGPEERDAGAGAARGRGRP). The SWIM-type zinc-finger motif lies at 139–176 (YHVSISFDRCKITSVSCGCDNRDLFYCAHVVALSLYRI).

The protein is Zinc finger SWIM domain-containing protein 4 (ZSWIM4) of Homo sapiens (Human).